A 217-amino-acid chain; its full sequence is Small ribosomal subunit protein uS3 (217 aa).

Residues 24–93 form the KH type-2 domain; sequence IKEFLEYKLS…NPQIDVIDVS (70 aa).

Belongs to the universal ribosomal protein uS3 family. As to quaternary structure, part of the 30S ribosomal subunit.

Functionally, binds the lower part of the 30S subunit head. This is Small ribosomal subunit protein uS3 from Pyrobaculum islandicum (strain DSM 4184 / JCM 9189 / GEO3).